The following is a 131-amino-acid chain: Small ribosomal subunit protein bS6 (131 aa).

At Lys-93 the chain carries N6-acetyllysine. Residues 98-131 are disordered; sequence EASPMVKAKDERRERRDDFANETADDAEAGDSEE. Residues 104–116 show a composition bias toward basic and acidic residues; that stretch reads KAKDERRERRDDF. A compositionally biased stretch (acidic residues) spans 120 to 131; it reads TADDAEAGDSEE.

This sequence belongs to the bacterial ribosomal protein bS6 family.

Binds together with bS18 to 16S ribosomal RNA. The sequence is that of Small ribosomal subunit protein bS6 from Escherichia fergusonii (strain ATCC 35469 / DSM 13698 / CCUG 18766 / IAM 14443 / JCM 21226 / LMG 7866 / NBRC 102419 / NCTC 12128 / CDC 0568-73).